We begin with the raw amino-acid sequence, 413 residues long: Multifunctional CCA protein (413 aa).

ATP is bound by residues glycine 8 and arginine 11. CTP is bound by residues glycine 8 and arginine 11. Mg(2+)-binding residues include aspartate 21 and aspartate 23. Residues arginine 91, arginine 143, and arginine 146 each coordinate ATP. Residues arginine 91, arginine 143, and arginine 146 each coordinate CTP. An HD domain is found at 232 to 333; the sequence is TGVHVMMVVD…VRFFERSDAL (102 aa).

It belongs to the tRNA nucleotidyltransferase/poly(A) polymerase family. Bacterial CCA-adding enzyme type 1 subfamily. Monomer. Can also form homodimers and oligomers. Requires Mg(2+) as cofactor. Ni(2+) is required as a cofactor.

The catalysed reaction is a tRNA precursor + 2 CTP + ATP = a tRNA with a 3' CCA end + 3 diphosphate. It catalyses the reaction a tRNA with a 3' CCA end + 2 CTP + ATP = a tRNA with a 3' CCACCA end + 3 diphosphate. Functionally, catalyzes the addition and repair of the essential 3'-terminal CCA sequence in tRNAs without using a nucleic acid template. Adds these three nucleotides in the order of C, C, and A to the tRNA nucleotide-73, using CTP and ATP as substrates and producing inorganic pyrophosphate. tRNA 3'-terminal CCA addition is required both for tRNA processing and repair. Also involved in tRNA surveillance by mediating tandem CCA addition to generate a CCACCA at the 3' terminus of unstable tRNAs. While stable tRNAs receive only 3'-terminal CCA, unstable tRNAs are marked with CCACCA and rapidly degraded. The protein is Multifunctional CCA protein of Burkholderia ambifaria (strain ATCC BAA-244 / DSM 16087 / CCUG 44356 / LMG 19182 / AMMD) (Burkholderia cepacia (strain AMMD)).